The following is a 399-amino-acid chain: Fructose-bisphosphate aldolase 1, chloroplastic (399 aa).

Residues 1 to 48 (MASSTATMLKASPVKSDWVKGQSLLLRQPSSVSAIRSHVAPSALTVRA) constitute a chloroplast transit peptide. R96 contacts substrate. A Phosphoserine modification is found at S158. K186 is a substrate binding site. Position 216 is a phosphoserine (S216). E226 serves as the catalytic Proton acceptor. Residue K268 is the Schiff-base intermediate with dihydroxyacetone-P of the active site. 310–312 (SGG) is a binding site for substrate. N6,N6,N6-trimethyllysine is present on K395.

It belongs to the class I fructose-bisphosphate aldolase family. Homotetramer. In terms of processing, can be trimethylated at Lys-395 by LSMT-L, but the trimethylation has no effect in vitro on the kinetic properties of the enzyme. Post-translationally, S-glutathionylated. As to expression, highly expressed in rosettes leaves and cauline leaves.

Its subcellular location is the plastid. It localises to the chloroplast. It is found in the plastoglobule. The protein localises to the chloroplast stroma. The enzyme catalyses beta-D-fructose 1,6-bisphosphate = D-glyceraldehyde 3-phosphate + dihydroxyacetone phosphate. The protein operates within carbohydrate degradation; glycolysis; D-glyceraldehyde 3-phosphate and glycerone phosphate from D-glucose: step 4/4. Functionally, plays a key role in glycolysis and gluconeogenesis. This is Fructose-bisphosphate aldolase 1, chloroplastic from Arabidopsis thaliana (Mouse-ear cress).